Consider the following 380-residue polypeptide: Probable peptidoglycan glycosyltransferase FtsW (380 aa).

A run of 10 helical transmembrane segments spans residues 14-34, 52-72, 79-99, 112-131, 141-161, 162-182, 188-208, 268-288, 304-324, and 341-361; these read LLWC…SSSI, ILYL…PISF, IILL…NSIH, MQPS…NYLS, FGGF…LLVE, PDLG…FISG, FIPT…KSPY, IIGE…IFFI, IFFS…QTLI, and PLIS…IILI.

The protein belongs to the SEDS family. FtsW subfamily.

The protein localises to the cell membrane. The catalysed reaction is [GlcNAc-(1-&gt;4)-Mur2Ac(oyl-L-Ala-gamma-D-Glu-L-Lys-D-Ala-D-Ala)](n)-di-trans,octa-cis-undecaprenyl diphosphate + beta-D-GlcNAc-(1-&gt;4)-Mur2Ac(oyl-L-Ala-gamma-D-Glu-L-Lys-D-Ala-D-Ala)-di-trans,octa-cis-undecaprenyl diphosphate = [GlcNAc-(1-&gt;4)-Mur2Ac(oyl-L-Ala-gamma-D-Glu-L-Lys-D-Ala-D-Ala)](n+1)-di-trans,octa-cis-undecaprenyl diphosphate + di-trans,octa-cis-undecaprenyl diphosphate + H(+). Its pathway is cell wall biogenesis; peptidoglycan biosynthesis. Peptidoglycan polymerase that is essential for cell division. The protein is Probable peptidoglycan glycosyltransferase FtsW of Buchnera aphidicola subsp. Baizongia pistaciae (strain Bp).